Here is a 204-residue protein sequence, read N- to C-terminus: Chaperone protein TorD (204 aa).

It belongs to the TorD/DmsD family. TorD subfamily.

The protein resides in the cytoplasm. In terms of biological role, involved in the biogenesis of TorA. Acts on TorA before the insertion of the molybdenum cofactor and, as a result, probably favors a conformation of the apoenzyme that is competent for acquiring the cofactor. This chain is Chaperone protein TorD, found in Shewanella baltica (strain OS223).